The following is a 325-amino-acid chain: Putative gluconeogenesis factor (325 aa).

This sequence belongs to the gluconeogenesis factor family.

It is found in the cytoplasm. Functionally, required for morphogenesis under gluconeogenic growth conditions. The sequence is that of Putative gluconeogenesis factor from Streptococcus pyogenes serotype M3 (strain ATCC BAA-595 / MGAS315).